The chain runs to 152 residues: Deoxyuridine 5'-triphosphate nucleotidohydrolase (152 aa).

Residues 71-73, asparagine 84, 88-90, and methionine 98 contribute to the substrate site; these read RSG and LID.

This sequence belongs to the dUTPase family. Requires Mg(2+) as cofactor.

The enzyme catalyses dUTP + H2O = dUMP + diphosphate + H(+). Its pathway is pyrimidine metabolism; dUMP biosynthesis; dUMP from dCTP (dUTP route): step 2/2. This enzyme is involved in nucleotide metabolism: it produces dUMP, the immediate precursor of thymidine nucleotides and it decreases the intracellular concentration of dUTP so that uracil cannot be incorporated into DNA. The sequence is that of Deoxyuridine 5'-triphosphate nucleotidohydrolase from Salmonella arizonae (strain ATCC BAA-731 / CDC346-86 / RSK2980).